The sequence spans 131 residues: UPF0102 protein YraN (131 aa).

Residues 1 to 19 (MATVPTRSGSPRQLTTKQT) are compositionally biased toward polar residues. The interval 1–20 (MATVPTRSGSPRQLTTKQTG) is disordered.

This sequence belongs to the UPF0102 family.

The polypeptide is UPF0102 protein YraN (Escherichia coli O8 (strain IAI1)).